The sequence spans 130 residues: Small ribosomal subunit protein uS11 (130 aa).

The segment at glutamate 109–valine 130 is disordered.

It belongs to the universal ribosomal protein uS11 family. In terms of assembly, part of the 30S ribosomal subunit.

Functionally, located on the platform of the 30S subunit. This Methanobrevibacter smithii (strain ATCC 35061 / DSM 861 / OCM 144 / PS) protein is Small ribosomal subunit protein uS11.